Consider the following 425-residue polypeptide: UDP-N-acetylglucosamine 1-carboxyvinyltransferase (425 aa).

K22–N23 serves as a coordination point for phosphoenolpyruvate. R93 serves as a coordination point for UDP-N-acetyl-alpha-D-glucosamine. The active-site Proton donor is the C117. C117 carries the post-translational modification 2-(S-cysteinyl)pyruvic acid O-phosphothioketal. Residues R122–L126, K162–V165, D307, and I329 contribute to the UDP-N-acetyl-alpha-D-glucosamine site.

It belongs to the EPSP synthase family. MurA subfamily.

The protein resides in the cytoplasm. It catalyses the reaction phosphoenolpyruvate + UDP-N-acetyl-alpha-D-glucosamine = UDP-N-acetyl-3-O-(1-carboxyvinyl)-alpha-D-glucosamine + phosphate. The protein operates within cell wall biogenesis; peptidoglycan biosynthesis. Cell wall formation. Adds enolpyruvyl to UDP-N-acetylglucosamine. The sequence is that of UDP-N-acetylglucosamine 1-carboxyvinyltransferase from Pasteurella multocida (strain Pm70).